Here is a 250-residue protein sequence, read N- to C-terminus: Cell division protein ZapD (250 aa).

The protein belongs to the ZapD family. In terms of assembly, interacts with FtsZ.

The protein resides in the cytoplasm. Cell division factor that enhances FtsZ-ring assembly. Directly interacts with FtsZ and promotes bundling of FtsZ protofilaments, with a reduction in FtsZ GTPase activity. The polypeptide is Cell division protein ZapD (Yersinia enterocolitica serotype O:8 / biotype 1B (strain NCTC 13174 / 8081)).